A 411-amino-acid polypeptide reads, in one-letter code: MSQTQPFLARVANGSLVIQIIVGIVAGILLASVAPESAISVGFLGGLFVSALKAVAPILVFILVASSIANQKKGAHTNMKPIIMLYLFGTLMAALTAVVMSFLFPTTLTLVAGNATASPPEGIAEVLNTLLFKIVDNPVNALMSGNFIGILAWAIALGFALHQASDATKQVFHDMSNGVTSIVRFVIRLAPIGIFGLVANTFAETGFAALAGYAHLLAVLLGSMAVIALVVNPAIVFFKTKENPYPLVFRCIRESGITAFFTRSSAANIPVNMQLCKDLDLHEDTYSVSIPLGATINMAGAAITITVLTLAAVHTMGVEVDIATAVLLSVVAAVSACGASGVAGGSLLLIPLACSLFGIPNEVAMQVVAVGFIIGVIQDSAETALNSSTDVLFTAAACKAAEAKVASPNIA.

Transmembrane regions (helical) follow at residues 14–34 (GSLVIQIIVGIVAGILLASVA), 43–63 (FLGGLFVSALKAVAPILVFIL), 82–102 (IIMLYLFGTLMAALTAVVMSF), 141–161 (ALMSGNFIGILAWAIALGFAL), 192–212 (IGIFGLVANTFAETGFAALAG), 218–238 (AVLLGSMAVIALVVNPAIVFF), 290–310 (IPLGATINMAGAAITITVLTL), 330–350 (VVAAVSACGASGVAGGSLLLI), and 357–377 (FGIPNEVAMQVVAVGFIIGVI).

It belongs to the dicarboxylate/amino acid:cation symporter (DAACS) (TC 2.A.23) family.

The protein resides in the cell inner membrane. It carries out the reaction L-serine(in) + Na(+)(in) = L-serine(out) + Na(+)(out). The enzyme catalyses L-threonine(in) + Na(+)(in) = L-threonine(out) + Na(+)(out). Involved in the import of serine and threonine into the cell, with the concomitant import of sodium (symport system). This chain is Serine/threonine transporter SstT, found in Photobacterium profundum (strain SS9).